The chain runs to 679 residues: Stress-70 protein, mitochondrial (679 aa).

The N-terminal 46 residues, Met1–Tyr46, are a transit peptide targeting the mitochondrion. The segment at Met1–Val432 is interaction with NFS1. Residues Thr63 and Asn64 each contribute to the ADP site. Residues Thr63–Asp431 are nucleotide-binding domain (NBD). N6-acetyllysine is present on Lys76. At Thr87 the chain carries Phosphothreonine. An N6-acetyllysine; alternate mark is found at Lys135 and Lys138. N6-succinyllysine; alternate is present on residues Lys135 and Lys138. Residue Lys143 is modified to N6-acetyllysine. N6-acetyllysine; alternate is present on Lys206. The residue at position 206 (Lys206) is an N6-succinyllysine; alternate. At Lys206 the chain carries N6-malonyllysine; alternate. An N6-acetyllysine mark is found at Lys234 and Lys288. At Lys300 the chain carries N6-acetyllysine; alternate. At Lys300 the chain carries N6-succinyllysine; alternate. ADP-binding residues include Glu313, Lys316, and Ser320. Lys360 bears the N6-acetyllysine; alternate mark. Lys360 bears the N6-succinyllysine; alternate mark. At Lys368 the chain carries N6-succinyllysine. The ADP site is built by Gly388 and Arg391. Position 394 is an N6-succinyllysine (Lys394). Ser408 is subject to Phosphoserine. The interval Val432–Thr441 is interdomain linker. Residues Val432 to Gln679 are interaction with FXN and ISCU. The substrate-binding domain (SBD) stretch occupies residues Pro442–Gln679. Arg513 bears the Omega-N-methylarginine mark. N6-acetyllysine; alternate occurs at positions 567 and 600. Lys567 and Lys600 each carry N6-succinyllysine; alternate. Residue Lys610 is modified to N6-succinyllysine. Lys612 carries the post-translational modification N6-acetyllysine. Lys646 is modified (N6-acetyllysine; alternate). At Lys646 the chain carries N6-succinyllysine; alternate. The interval Met655–Gln679 is disordered. Residues Glu669–Gln679 are compositionally biased toward basic and acidic residues.

It belongs to the heat shock protein 70 family. In terms of assembly, interacts strongly with the intermediate form of FXN and weakly with its mature form. Interacts with HSCB. Associates with the mitochondrial contact site and cristae organizing system (MICOS) complex, composed of at least MICOS10/MIC10, CHCHD3/MIC19, CHCHD6/MIC25, APOOL/MIC27, IMMT/MIC60, APOO/MIC23/MIC26 and QIL1/MIC13. This complex was also known under the names MINOS or MitOS complex. The MICOS complex associates with mitochondrial outer membrane proteins SAMM50, MTX1, MTX2 and DNAJC11, mitochondrial inner membrane protein TMEM11 and with HSPA9. Interacts with DNLZ, the interaction is required to prevent self-aggregation. Interacts with TESPA1. Interacts with PDPN. Interacts with NFU1, NFS1 and ISCU. Interacts with TP53; the interaction promotes TP53 degradation. Interacts (via SBD domain) with UBXN2A; the interaction with UBXN2A inhibits HSPA9 interaction with and degradation of TP53, thereby promotes TP53 translocation to the nucleus. Interacts with ITPR1 AND VDAC1; this interaction couples ITPR1 to VDAC1. Component of the TIM23 mitochondrial inner membrane pre-sequence translocase complex.

The protein localises to the mitochondrion. It localises to the nucleus. The protein resides in the nucleolus. It is found in the cytoplasm. Its subcellular location is the mitochondrion matrix. It carries out the reaction ATP + H2O = ADP + phosphate + H(+). Its activity is regulated as follows. The chaperone activity is regulated by ATP-induced allosteric coupling of the nucleotide-binding (NBD) and substrate-binding (SBD) domains. ATP binding in the nucleotide-binding pocket (NBP) leads to a conformational change in the NBD, which is transferred through the interdomain linker (IDL) to the substrate-binding domain (SBD). This elicits a reduced substrate affinity and a faster substrate exchange rate. Upon hydrolysis of ATP to ADP, the protein undergoes a conformational change that increases its affinity for substrate proteins. It cycles through repeated phases of ATP hydrolysis and nucleotide exchange, facilitating repeated cycles of substrate binding and release. Functions in collaboration with co-chaperones. Functions with the co-chaperone, DNLZ, to maintain solubility and regulate ATP hydrolysis. Nucleotide exchange factors, GRPEL1 and GRPEL2, accelerate nucleotide exchange. Its function is as follows. Mitochondrial chaperone that plays a key role in mitochondrial protein import, folding, and assembly. Plays an essential role in the protein quality control system, the correct folding of proteins, the re-folding of misfolded proteins, and the targeting of proteins for subsequent degradation. These processes are achieved through cycles of ATP binding, ATP hydrolysis, and ADP release, mediated by co-chaperones. In mitochondria, it associates with the TIM (translocase of the inner membrane) protein complex to assist in the import and folding of mitochondrial proteins. Plays an important role in mitochondrial iron-sulfur cluster (ISC) biogenesis, interacts with and stabilizes ISC cluster assembly proteins FXN, NFU1, NFS1 and ISCU. Regulates erythropoiesis via stabilization of ISC assembly. Regulates mitochondrial calcium-dependent apoptosis by coupling two calcium channels, ITPR1 and VDAC1, at the mitochondria-associated endoplasmic reticulum (ER) membrane to facilitate calcium transport from the ER lumen to the mitochondria intermembrane space, providing calcium for the downstream calcium channel MCU, which releases it into the mitochondrial matrix. Although primarily located in the mitochondria, it is also found in other cellular compartments. In the cytosol, it associates with proteins involved in signaling, apoptosis, or senescence. It may play a role in cell cycle regulation via its interaction with and promotion of degradation of TP53. May play a role in the control of cell proliferation and cellular aging. Protects against reactive oxygen species (ROS). Extracellular HSPA9 plays a cytoprotective role by preventing cell lysis following immune attack by the membrane attack complex by disrupting formation of the complex. This chain is Stress-70 protein, mitochondrial, found in Rattus norvegicus (Rat).